The sequence spans 599 residues: MSRSLLLWFLLFLLLLPPLPVLLADPGAPTPVNPCCYYPCQHQGICVRFGLDRYQCDCTRTGYSGPNCTIPGLWTWLRNSLRPSPSFTHFLLTHGRWFWEFVNATFIREMLMRLVLTVRSNLIPSPPTYNSAHDYISWESFSNVSYYTRILPSVPKDCPTPMGTKGKKQLPDAQLLARRFLLRRKFIPDPQGTNLMFAFFAQHFTHQFFKTSGKMGPGFTKALGHGVDLGHIYGDNLERQYQLRLFKDGKLKYQVLDGEMYPPSVEEAPVLMHYPRGIPPQSQMAVGQEVFGLLPGLMLYATLWLREHNRVCDLLKAEHPTWGDEQLFQTTRLILIGETIKIVIEEYVQQLSGYFLQLKFDPELLFGVQFQYRNRIAMEFNHLYHWHPLMPDSFKVGSQEYSYEQFLFNTSMLVDYGVEALVDAFSRQIAGRIGGGRNMDHHILHVAVDVIRESREMRLQPFNEYRKRFGMKPYTSFQELVGEKEMAAELEELYGDIDALEFYPGLLLEKCHPNSIFGESMIEIGAPFSLKGLLGNPICSPEYWKPSTFGGEVGFNIVKTATLKKLVCLNTKTCPYVSFRVPDASQDDGPAVERPSTEL.

An N-terminal signal peptide occupies residues 1–23 (MSRSLLLWFLLFLLLLPPLPVLL). An EGF-like domain is found at 31-69 (PVNPCCYYPCQHQGICVRFGLDRYQCDCTRTGYSGPNCT). 4 cysteine pairs are disulfide-bonded: Cys-35–Cys-46, Cys-36–Cys-158, Cys-40–Cys-56, and Cys-58–Cys-68. N-linked (GlcNAc...) asparagine glycosylation is found at Asn-67, Asn-103, and Asn-143. The Proton acceptor role is filled by His-206. Tyr-384 serves as the catalytic For cyclooxygenase activity. Residue His-387 participates in heme b binding. A disulfide bridge links Cys-568 with Cys-574.

Belongs to the prostaglandin G/H synthase family. As to quaternary structure, homodimer. Requires heme b as cofactor.

It localises to the microsome membrane. The protein resides in the endoplasmic reticulum membrane. The catalysed reaction is (5Z,8Z,11Z,14Z)-eicosatetraenoate + AH2 + 2 O2 = prostaglandin H2 + A + H2O. The enzyme catalyses (5Z,8Z,11Z,14Z)-eicosatetraenoate + 2 O2 = prostaglandin G2. It carries out the reaction prostaglandin G2 + AH2 = prostaglandin H2 + A + H2O. It catalyses the reaction (9Z,12Z)-octadecadienoate + AH2 + O2 = (9R)-hydroxy-(10E,12Z)-octadecadienoate + A + H2O. The catalysed reaction is (9Z,12Z)-octadecadienoate + AH2 + O2 = (9S)-hydroxy-(10E,12Z)-octadecadienoate + A + H2O. The enzyme catalyses (9Z,12Z)-octadecadienoate + AH2 + O2 = (13S)-hydroxy-(9Z,11E)-octadecadienoate + A + H2O. It carries out the reaction (9Z,12Z)-octadecadienoate + AH2 + O2 = (13R)-hydroxy-(9Z,11E)-octadecadienoate + A + H2O. The protein operates within lipid metabolism; prostaglandin biosynthesis. With respect to regulation, the cyclooxygenase activity is inhibited by nonsteroidal anti-inflammatory drugs (NSAIDs) including ibuprofen, flurbiprofen, ketoprofen, naproxen, flurbiprofen, anirolac, fenclofenac and diclofenac. Functionally, dual cyclooxygenase and peroxidase that plays an important role in the biosynthesis pathway of prostanoids, a class of C20 oxylipins mainly derived from arachidonate ((5Z,8Z,11Z,14Z)-eicosatetraenoate, AA, C20:4(n-6)), with a particular role in the inflammatory response. The cyclooxygenase activity oxygenates AA to the hydroperoxy endoperoxide prostaglandin G2 (PGG2), and the peroxidase activity reduces PGG2 to the hydroxy endoperoxide prostaglandin H2 (PGH2), the precursor of all 2-series prostaglandins and thromboxanes. This complex transformation is initiated by abstraction of hydrogen at carbon 13 (with S-stereochemistry), followed by insertion of molecular O2 to form the endoperoxide bridge between carbon 9 and 11 that defines prostaglandins. The insertion of a second molecule of O2 (bis-oxygenase activity) yields a hydroperoxy group in PGG2 that is then reduced to PGH2 by two electrons. Involved in the constitutive production of prostanoids in particular in the stomach and platelets. In gastric epithelial cells, it is a key step in the generation of prostaglandins, such as prostaglandin E2 (PGE2), which plays an important role in cytoprotection. In platelets, it is involved in the generation of thromboxane A2 (TXA2), which promotes platelet activation and aggregation, vasoconstriction and proliferation of vascular smooth muscle cells. Can also use linoleate (LA, (9Z,12Z)-octadecadienoate, C18:2(n-6)) as substrate and produce hydroxyoctadecadienoates (HODEs) in a regio- and stereospecific manner, being (9R)-HODE ((9R)-hydroxy-(10E,12Z)-octadecadienoate) and (13S)-HODE ((13S)-hydroxy-(9Z,11E)-octadecadienoate) its major products. This Homo sapiens (Human) protein is Prostaglandin G/H synthase 1.